Consider the following 315-residue polypeptide: Alpha- and gamma-adaptin-binding protein p34 (315 aa).

The interval 197 to 233 is disordered; sequence IGSADPCHPEQPHLPAADRTESLSDHRGGASNTTDAQ. A compositionally biased stretch (basic and acidic residues) spans 203 to 224; that stretch reads CHPEQPHLPAADRTESLSDHRG. Ser-310 and Ser-311 each carry phosphoserine.

As to quaternary structure, associated with AP-1 and AP-2 complexes.

The protein localises to the cytoplasm. Its subcellular location is the cytosol. In terms of biological role, may be involved in endocytic recycling of growth factor receptors such as EGFR. In Pongo abelii (Sumatran orangutan), this protein is Alpha- and gamma-adaptin-binding protein p34 (AAGAB).